The chain runs to 33 residues: Photosystem II reaction center protein Psb30 (33 aa).

Residues 5–25 form a helical membrane-spanning segment; that stretch reads VILQLGSILLVVAAGPLVIVL.

Belongs to the Psb30/Ycf12 family. PSII is composed of 1 copy each of membrane proteins PsbA, PsbB, PsbC, PsbD, PsbE, PsbF, PsbH, PsbI, PsbJ, PsbK, PsbL, PsbM, PsbT, PsbX, PsbY, PsbZ, Psb30/Ycf12, peripheral proteins of the oxygen-evolving complex and a large number of cofactors. It forms dimeric complexes.

The protein resides in the plastid. The protein localises to the chloroplast thylakoid membrane. In terms of biological role, a core subunit of photosystem II (PSII), probably helps stabilize the reaction center. This is Photosystem II reaction center protein Psb30 from Oltmannsiellopsis viridis (Marine flagellate).